Reading from the N-terminus, the 1086-residue chain is MDFSEASTSGDRVNGFAKPFPPKPREGAPPPAPPLAPGASTSQAPPPLQPPPVIESAEKFYVPGVEEKSKFRILSQQVEISNLNISTRSFNVRTEIVLLPCEKSLYQLDLHIGKCSLLPNEVPGSASKVTLNGVECEYSRRDFWKDLAQEKSISSLEPVLYEKLAENDYELQILIPKEVRKKIKHRKAVRLRVDTVVRDPPRGLQFVDFNEHDCHVFTYHTPHISGAREWTVCLDEPDQLALWELTFELEPHLVPVASGELEEKREVSENGKIRYKFHQTVPTSACNIGWAIGRFKLEPHPESPTIYTFSLPGLEPFVNHTTMYLDKMVEFLEEKLSCRFPYPTLKVVFVDQCTEEIQVYSSLLIVPTAMLYHKKIIDVVQEARQKLIFSIALQFFGCLISPAQWWHWWIPVSIARFLTSLYVETKLGTAEARWQLKRAMDDVCDYEHQWGKIVLSPPEPTKKLPLHVDPRHEYTASPLYVEAMLKKGFLTMRMLQRRIGLEPFMRVLHRVLTVGLDMSEKKTTPAAWRHLLTTTESFFRSVISVTGKEIPSFLSQFVRTGGHAAFAVKFDFNRKRNIVEIEIKQDDTEGNGRTQYTGPLSVVVQEVDGAFTHTIQIDGAVSHAEISCHSKGRKQRKKKVPLLTGEEIEIDLTNMDAESPILWLRIDPDYLLIREITISQPMFHWEYMLRYERDVIAQMEALERIQALPSAHSRSVIVDAVANEKFFYRIRYRAAFVLTFVQNRKSEALTVGTPVLINMFRESFGSKAATNIPRSNNFVVTAQNLQQYFVMQALPQAIARLRRQSGECHEDVQPFLLDLIKFNDNSTNRYSDDFYRAALYNSLASSVFPHDALPCHVELPENLSNDVRVLIKEFTYALNMDTVSPSWGRVVGAAALTGLYQLQKCGYLPLDSQLLWTFSHPNCCVQMRRCAITLIIDRIVNDPHAADTRMLDLSRILELAELEQDPSIRRMIPRLLAQTPPTIFGSENAANTAETAERLWKLCTNSSIDSCIRSGFLDVYYSLYALGAPPALGGPEESVGIHRAYVTVPNAASTFATSQWHNSGYEAARRSPPRRDFGDETMNLMQ.

A compositionally biased stretch (polar residues) spans 1–11 (MDFSEASTSGD). 2 disordered regions span residues 1-53 (MDFS…PPPV) and 1064-1086 (GYEA…NLMQ). 2 stretches are compositionally biased toward pro residues: residues 19-36 (PFPP…PPLA) and 44-53 (APPPLQPPPV). Basic and acidic residues predominate over residues 1067 to 1078 (AARRSPPRRDFG).

Belongs to the TAF2 family. Component of the TFIID basal transcription factor complex, composed of TATA-box-binding protein tbp-1, and a number of TBP-associated factors (TAFs).

Its subcellular location is the nucleus. In terms of biological role, the TFIID basal transcription factor complex plays a major role in the initiation of RNA polymerase II (Pol II)-dependent transcription. TFIID recognizes and binds promoters via its subunit tbp-1, a TATA-box-binding protein, and promotes assembly of the pre-initiation complex (PIC). The TFIID complex consists of tbp-1 and TBP-associated factors (TAFs), including taf-2. May regulate RNA polymerase II activity and thereby may control transcription initiation by RNA polymerase II. This Caenorhabditis elegans protein is Transcription initiation factor TFIID subunit 2.